Reading from the N-terminus, the 192-residue chain is NADH-quinone oxidoreductase subunit B (192 aa).

The [4Fe-4S] cluster site is built by C71, C72, C136, and C166.

The protein belongs to the complex I 20 kDa subunit family. As to quaternary structure, NDH-1 is composed of 14 different subunits. Subunits NuoB, C, D, E, F, and G constitute the peripheral sector of the complex. The cofactor is [4Fe-4S] cluster.

It is found in the cell inner membrane. It carries out the reaction a quinone + NADH + 5 H(+)(in) = a quinol + NAD(+) + 4 H(+)(out). In terms of biological role, NDH-1 shuttles electrons from NADH, via FMN and iron-sulfur (Fe-S) centers, to quinones in the respiratory chain. Couples the redox reaction to proton translocation (for every two electrons transferred, four hydrogen ions are translocated across the cytoplasmic membrane), and thus conserves the redox energy in a proton gradient. The protein is NADH-quinone oxidoreductase subunit B of Azorhizobium caulinodans (strain ATCC 43989 / DSM 5975 / JCM 20966 / LMG 6465 / NBRC 14845 / NCIMB 13405 / ORS 571).